We begin with the raw amino-acid sequence, 124 residues long: MQRTYTVTIPSFEPALTVFMLVKTSPEWLGFPVERRFALLEEQFTPILRKHAAHVTLRFFDVEFYATRVTDLWMWDARDHHSYQLLVEDLRETAFWDRYFEIVEILPGVENAYARNYGRPAINA.

This sequence belongs to the darcynin family.

This Granulibacter bethesdensis (strain ATCC BAA-1260 / CGDNIH1) protein is Darcynin homolog.